The chain runs to 444 residues: tRNA-2-methylthio-N(6)-dimethylallyladenosine synthase (444 aa).

An MTTase N-terminal domain is found at 2 to 119 (KKLYIRTFGC…LPSMLNEVLT (118 aa)). 6 residues coordinate [4Fe-4S] cluster: Cys11, Cys48, Cys82, Cys161, Cys165, and Cys168. One can recognise a Radical SAM core domain in the interval 147–379 (KTSSVTAFVS…QKTIDKNTER (233 aa)). Positions 382–444 (KSMVGSVQKI…GNSLVGNLIA (63 aa)) constitute a TRAM domain.

Belongs to the methylthiotransferase family. MiaB subfamily. Monomer. It depends on [4Fe-4S] cluster as a cofactor.

It is found in the cytoplasm. The catalysed reaction is N(6)-dimethylallyladenosine(37) in tRNA + (sulfur carrier)-SH + AH2 + 2 S-adenosyl-L-methionine = 2-methylsulfanyl-N(6)-dimethylallyladenosine(37) in tRNA + (sulfur carrier)-H + 5'-deoxyadenosine + L-methionine + A + S-adenosyl-L-homocysteine + 2 H(+). In terms of biological role, catalyzes the methylthiolation of N6-(dimethylallyl)adenosine (i(6)A), leading to the formation of 2-methylthio-N6-(dimethylallyl)adenosine (ms(2)i(6)A) at position 37 in tRNAs that read codons beginning with uridine. This is tRNA-2-methylthio-N(6)-dimethylallyladenosine synthase from Ruthia magnifica subsp. Calyptogena magnifica.